Here is a 108-residue protein sequence, read N- to C-terminus: Large ribosomal subunit protein uL24 (108 aa).

It belongs to the universal ribosomal protein uL24 family. Part of the 50S ribosomal subunit.

Its function is as follows. One of two assembly initiator proteins, it binds directly to the 5'-end of the 23S rRNA, where it nucleates assembly of the 50S subunit. In terms of biological role, one of the proteins that surrounds the polypeptide exit tunnel on the outside of the subunit. The polypeptide is Large ribosomal subunit protein uL24 (Mycoplasma capricolum subsp. capricolum (strain California kid / ATCC 27343 / NCTC 10154)).